The chain runs to 92 residues: Small ribosomal subunit protein uS19 (92 aa).

It belongs to the universal ribosomal protein uS19 family.

In terms of biological role, protein S19 forms a complex with S13 that binds strongly to the 16S ribosomal RNA. The protein is Small ribosomal subunit protein uS19 of Corynebacterium urealyticum (strain ATCC 43042 / DSM 7109).